Here is a 664-residue protein sequence, read N- to C-terminus: MHFETTKDGFTIAIGNRIILSHSPDKPAFFAGFGEERMDMYRGNFDIEDYVIERTALRHAEVSGDSVTLSSAPGQAPRLRLTLDGNAIRLTALDETINRLWLRVVAETDEHVWGGGEQMSYFDMRGRRFPLWTSEPGVGRDKTTEITFKSDVSGKAGGDYYNTNYPQPTWLSSRKYALHVETSAYSVFDFRNGDFHEIEIWAVPEKIEFFAGDSFADIVSALSLHFGRQPELPDWVYNGAIIGLKDGVNSFARLEKIRAAGTKVSGLWCEDWVGLRQTSFGARLFWDWQANDTRYPHLRQKIAELADQGIRFLGYVNPYLCVDGPLFPVAESAGYFATDVDGKTALVDFGEFDCGVVDFTNPAAADWFAEEIIGKNMLDFGLSGWMADFGEYLPIDIKLSNGVDAKLMHNAWPTLWAEVNAKGVESRGKTGEALFFMRAGFTGVQAHCPLIWGGDQSVDFSRHDGLVTVICGALSSGLMGNAYHHSDIGGYTSLFGNVRTAELIMRWTEMAAFTPVMRTHEGNRPRDNLQIDQDETVLAHFARMTAIYVALAPYLKSLSAEAAKTGLPVQRPLFLHYENEPQTYAVQDCYLYGADMLVAPVWKAGETQRSLYLPGHGEWVHLWSGKRHAGGRDITVETPLGEPAVFYRADSSHHRLFEQLRTIG.

Glu-135, Glu-270, Arg-283, Leu-284, and Trp-286 together coordinate 3-(6-sulfo-alpha-D-quinovosyl)glycerol. Asp-388 acts as the Nucleophile in catalysis. The active site involves Glu-391. Arg-438 lines the 3-(6-sulfo-alpha-D-quinovosyl)glycerol pocket. Asp-455 functions as the Proton donor in the catalytic mechanism. 3-(6-sulfo-alpha-D-quinovosyl)glycerol is bound at residue His-520.

This sequence belongs to the glycosyl hydrolase 31 family.

It carries out the reaction 3-(6-sulfo-alpha-D-quinovosyl)glycerol + H2O = 6-sulfo-alpha-D-quinovose + glycerol. Its function is as follows. Part of the sulfoquinovose monooxygenase (sulfo-SMO) pathway, a D-sulfoquinovose degradation pathway that enables the complete utilization of all carbons within sulfoquinovose (SQ) with concomitant production of inorganic sulfite. Catalyzes the first step of the pathway, the hydrolysis of sulfoquinovosyl glycerol (SQGro) to release sulfoquinovose (SQ). Hydrolyzes both epimers of SQGro, with a preference for the natural 2'R isomer. In vitro, can use the substrate analog para-nitrophenyl alpha-sulfoquinovoside (PNPSQ), but shows no detectable activity toward 4-nitrophenyl alpha-D-glucopyranoside (PNPGlc). The polypeptide is Sulfoquinovosidase (Agrobacterium fabrum (strain C58 / ATCC 33970) (Agrobacterium tumefaciens (strain C58))).